A 260-amino-acid chain; its full sequence is Aspartate/glutamate leucyltransferase (260 aa).

It belongs to the R-transferase family. Bpt subfamily.

The protein localises to the cytoplasm. It catalyses the reaction N-terminal L-glutamyl-[protein] + L-leucyl-tRNA(Leu) = N-terminal L-leucyl-L-glutamyl-[protein] + tRNA(Leu) + H(+). The enzyme catalyses N-terminal L-aspartyl-[protein] + L-leucyl-tRNA(Leu) = N-terminal L-leucyl-L-aspartyl-[protein] + tRNA(Leu) + H(+). Functions in the N-end rule pathway of protein degradation where it conjugates Leu from its aminoacyl-tRNA to the N-termini of proteins containing an N-terminal aspartate or glutamate. The protein is Aspartate/glutamate leucyltransferase of Sphingomonas elodea.